An 85-amino-acid chain; its full sequence is Small ribosomal subunit protein uS17 (85 aa).

This sequence belongs to the universal ribosomal protein uS17 family. As to quaternary structure, part of the 30S ribosomal subunit.

One of the primary rRNA binding proteins, it binds specifically to the 5'-end of 16S ribosomal RNA. The sequence is that of Small ribosomal subunit protein uS17 from Citrifermentans bemidjiense (strain ATCC BAA-1014 / DSM 16622 / JCM 12645 / Bem) (Geobacter bemidjiensis).